A 30-amino-acid chain; its full sequence is Ribosome-inactivating protein momorcochin-S (30 aa).

It belongs to the ribosome-inactivating protein family. Type 1 RIP subfamily. In terms of processing, glycosylated.

The catalysed reaction is Endohydrolysis of the N-glycosidic bond at one specific adenosine on the 28S rRNA.. Inactivates eukaryotic 60S ribosomal subunits. In Momordica cochinchinensis (Spiny bitter cucumber), this protein is Ribosome-inactivating protein momorcochin-S.